We begin with the raw amino-acid sequence, 241 residues long: Small ribosomal subunit protein uS2 (241 aa).

Belongs to the universal ribosomal protein uS2 family.

This Cronobacter sakazakii (strain ATCC BAA-894) (Enterobacter sakazakii) protein is Small ribosomal subunit protein uS2.